Reading from the N-terminus, the 931-residue chain is Kinesin heavy chain (931 aa).

The region spanning 6–329 (SIKVVARFRP…LRFGMRAKSI (324 aa)) is the Kinesin motor domain. ATP contacts are provided by residues 87–94 (GQTGAGKS) and 237–244 (GSEKVGKT). Residues 342 to 864 (AELKSLLKKA…VKERLELAKA (523 aa)) adopt a coiled-coil conformation. Disordered stretches follow at residues 388–465 (TTDA…EKQL) and 886–931 (AKPL…FTKS). Residues 402–419 (STRPSTPSLISDSRSETP) are compositionally biased toward polar residues. Residues 432–456 (LDKDEREEFLRRENELQDQISEKES) show a composition bias toward basic and acidic residues. A compositionally biased stretch (polar residues) spans 902–931 (PTIQNLQGQNEGNTSSGSSSKRASWFFTKS).

It belongs to the TRAFAC class myosin-kinesin ATPase superfamily. Kinesin family. Kinesin subfamily.

It localises to the cytoplasm. It is found in the cytoskeleton. In terms of biological role, kinesin is a microtubule-associated force-producing protein that may play a role in organelle transport. Its motor activity is directed toward the microtubule's plus end. The chain is Kinesin heavy chain (KLP1) from Gibberella moniliformis (Maize ear and stalk rot fungus).